We begin with the raw amino-acid sequence, 333 residues long: Sphingomyelinase C (333 aa).

The first 27 residues, 1–27, serve as a signal peptide directing secretion; sequence MKGKLLKGVLSFGIGLGVLYGGSSVQA. Cys-150 and Cys-186 form a disulfide bridge.

This sequence belongs to the neutral sphingomyelinase family. The cofactor is Mg(2+).

The protein localises to the secreted. The enzyme catalyses a sphingomyelin + H2O = phosphocholine + an N-acylsphing-4-enine + H(+). Its activity is regulated as follows. Activated by cobalt and manganese ions. Required, with sphingomyelinase, to effect target cell lysis (hemolysis). The sequence is that of Sphingomyelinase C (sph) from Bacillus cereus.